The following is a 238-amino-acid chain: MIAFIVLLSLAAVLQQSSGTVDFASESSNKKDYQKEIVDKHNALRRSVKPTARNMLRMEWNSHAAQNAKRWADRCTFAHSPPHTRTVGKLRCGENIFMSSQPFAWSGVVQAWYDEVKKFVYGIGAKPPGSVIGHYTQVVWYKSHLLGCASAKCSSTKYLYVCQYCPAGNIRGSIATPYKSGPTCGDCPSACVNGLCTNPCKYEDDFSNCKALAKNSKCQTEWIKSKCPAACFCHNKII.

An N-terminal signal peptide occupies residues 1-19; the sequence is MIAFIVLLSLAAVLQQSSG. A propeptide spanning residues 20-28 is cleaved from the precursor; that stretch reads TVDFASESS. Positions 38–164 constitute an SCP domain; it reads VDKHNALRRS…STKYLYVCQY (127 aa). Disulfide bonds link Cys-75/Cys-153, Cys-92/Cys-165, Cys-148/Cys-162, Cys-184/Cys-191, Cys-187/Cys-196, Cys-200/Cys-233, Cys-209/Cys-227, and Cys-218/Cys-231. Residues 200 to 233 enclose the ShKT domain; the sequence is CKYEDDFSNCKALAKNSKCQTEWIKSKCPAACFC.

Belongs to the CRISP family. In terms of tissue distribution, expressed by the venom gland.

The protein localises to the secreted. Functionally, blocks olfactory (CNGA2) and retinal (CNGA1) CNG channel currents. Does not affect neither depolarization- nor caffeine-induced contraction of smooth muscle. This Notechis scutatus scutatus (Mainland tiger snake) protein is Cysteine-rich venom protein pseudechetoxin-like.